Reading from the N-terminus, the 1014-residue chain is Exportin-T (1014 aa).

The protein belongs to the exportin family.

The protein resides in the nucleus. It localises to the cytoplasm. TRNA nucleus export receptor which facilitates tRNA translocation across the nuclear pore complex. Involved in pre-tRNA splicing, probably by affecting the interaction of pre-tRNA with splicing endonuclease. This Podospora anserina (strain S / ATCC MYA-4624 / DSM 980 / FGSC 10383) (Pleurage anserina) protein is Exportin-T (LOS1).